Here is an 864-residue protein sequence, read N- to C-terminus: Leucine--tRNA ligase (864 aa).

Positions 42–52 (PYPSGKLHMGH) match the 'HIGH' region motif. A 'KMSKS' region motif is present at residues 624–628 (KMSKS). Lys-627 provides a ligand contact to ATP.

This sequence belongs to the class-I aminoacyl-tRNA synthetase family.

The protein resides in the cytoplasm. It catalyses the reaction tRNA(Leu) + L-leucine + ATP = L-leucyl-tRNA(Leu) + AMP + diphosphate. The sequence is that of Leucine--tRNA ligase from Burkholderia mallei (strain ATCC 23344).